A 466-amino-acid chain; its full sequence is Soluble pyridine nucleotide transhydrogenase (466 aa).

Residue 36–45 (ERYHNVGGGC) coordinates FAD.

The protein belongs to the class-I pyridine nucleotide-disulfide oxidoreductase family. FAD is required as a cofactor.

Its subcellular location is the cytoplasm. It catalyses the reaction NAD(+) + NADPH = NADH + NADP(+). Functionally, conversion of NADPH, generated by peripheral catabolic pathways, to NADH, which can enter the respiratory chain for energy generation. The protein is Soluble pyridine nucleotide transhydrogenase of Citrobacter koseri (strain ATCC BAA-895 / CDC 4225-83 / SGSC4696).